Consider the following 274-residue polypeptide: Large ribosomal subunit protein uL2 (274 aa).

Disordered stretches follow at residues 34-54 and 224-261; these read LEKK…TRHI and VAMN…KTRA.

The protein belongs to the universal ribosomal protein uL2 family. In terms of assembly, part of the 50S ribosomal subunit. Forms a bridge to the 30S subunit in the 70S ribosome.

Its function is as follows. One of the primary rRNA binding proteins. Required for association of the 30S and 50S subunits to form the 70S ribosome, for tRNA binding and peptide bond formation. It has been suggested to have peptidyltransferase activity; this is somewhat controversial. Makes several contacts with the 16S rRNA in the 70S ribosome. The polypeptide is Large ribosomal subunit protein uL2 (Ectopseudomonas mendocina (strain ymp) (Pseudomonas mendocina)).